Reading from the N-terminus, the 1016-residue chain is Coiled-coil domain-containing protein 57 (1016 aa).

The tract at residues 1 to 503 is centrosomal targeting domain; that stretch reads MLPLCSEREL…HGLLPGQEAQ (503 aa). Coiled-coil stretches lie at residues 14–607, 676–700, and 748–775; these read LARK…PVKT, SEVD…KHLK, and VTHL…LLEM. 2 disordered regions span residues 500–519 and 549–573; these read QEAQ…DSPS and HLPP…DSTP. The tract at residues 604–1016 is microtubule binding domain; that stretch reads PVKTSVATAD…SRIRNYNLKD (413 aa). Disordered regions lie at residues 781–921 and 933–1016; these read AEQG…LASS and GSSP…NLKD. Composition is skewed to polar residues over residues 846-859 and 934-945; these read QPHS…TNTP and SSPSGVPSQDNS.

As to quaternary structure, interacts with CEP63; the interaction is required for their location to proximal end of centrioles. Interacts with microtubules.

It is found in the cytoplasm. It localises to the cytoskeleton. The protein resides in the microtubule organizing center. Its subcellular location is the centrosome. The protein localises to the centriolar satellite. It is found in the centriole. It localises to the spindle. Its function is as follows. Pleiotropic regulator of centriole duplication, mitosis, and ciliogenesis. Critical interface between centrosome and microtubule-mediated cellular processes. Centriole duplication protein required for recruitment of CEP63, CEP152, and PLK4 to the centrosome. Independent of its centrosomal targeting, localizes to and interacts with microtubules and regulates microtubule nucleation, stability, and mitotic progression. The polypeptide is Coiled-coil domain-containing protein 57 (Mus musculus (Mouse)).